Here is a 164-residue protein sequence, read N- to C-terminus: Large ribosomal subunit protein bL9 (164 aa).

Belongs to the bacterial ribosomal protein bL9 family.

Functionally, binds to the 23S rRNA. The sequence is that of Large ribosomal subunit protein bL9 from Borrelia recurrentis (strain A1).